A 107-amino-acid polypeptide reads, in one-letter code: High mobility group protein HMG-I/HMG-Y (107 aa).

Residues Met1–Gln107 form a disordered region. Ser2 is modified (N-acetylserine). Lys7 is modified (N6-acetyllysine). Residue Ser8 is modified to ADP-ribosylserine. ADP-ribosylserine; alternate is present on Ser9. At Ser9 the chain carries Phosphoserine; alternate. Residue Lys15 is modified to N6-acetyllysine; alternate. A Glycyl lysine isopeptide (Lys-Gly) (interchain with G-Cter in SUMO2); alternate cross-link involves residue Lys15. The segment covering Lys15 to Arg24 has biased composition (basic and acidic residues). A DNA-binding region (a.T hook 1) is located at residues Thr21–Lys31. Arg26 carries the post-translational modification Asymmetric dimethylarginine; alternate. Arg26 is modified (omega-N-methylarginine; alternate). Residue Arg26 is modified to Symmetric dimethylarginine; alternate. Ser36 carries the phosphoserine; by HIPK2 and CDC2 modification. Position 39 is a phosphothreonine (Thr39). Phosphoserine occurs at positions 44 and 49. Thr53 is modified (phosphothreonine; by HIPK2 and CDC2). 2 consecutive DNA-binding regions (a.T hook) follow at residues Thr53–Gly63 and Ala78–Lys89. The tract at residues Thr53–Thr77 is interaction with HIPK2. A compositionally biased stretch (basic residues) spans Lys55 to Lys74. Residues Arg58 and Arg60 each carry the asymmetric dimethylarginine; by PRMT6; alternate modification. Omega-N-methylarginine; by PRMT6; alternate occurs at positions 58 and 60. Over residues Glu93–Gln107 the composition is skewed to acidic residues. 3 positions are modified to phosphoserine: Ser99, Ser102, and Ser103.

It belongs to the HMGA family. As to quaternary structure, interacts with HIPK2. In terms of processing, isoforms HMG-I and HMG-Y can be phosphorylated by HIPK2. Phosphorylation may modulate DNA-binding affinity. Post-translationally, methylation at Arg-58 is mutually exclusive with methylation at Arg-60.

It is found in the nucleus. The protein resides in the chromosome. HMG-I/Y bind preferentially to the minor groove of A+T rich regions in double-stranded DNA. It is suggested that these proteins could function in nucleosome phasing and in the 3'-end processing of mRNA transcripts. They are also involved in the transcription regulation of genes containing, or in close proximity to A+T-rich regions. The protein is High mobility group protein HMG-I/HMG-Y (HMGA1) of Cricetulus griseus (Chinese hamster).